A 209-amino-acid chain; its full sequence is Bacteriorhodopsin (209 aa).

The chain crosses the membrane as a helical span at residues 1–17; it reads LWLGTAGMFLGMLYFIA. Over 18-31 the chain is Cytoplasmic; it reads RGWGETDGRRQKFY. The chain crosses the membrane as a helical span at residues 32 to 50; sequence IATILITAIAFVNYLAMAL. The Extracellular segment spans residues 51 to 66; it reads GFGLTFIEFGGEQHPI. The chain crosses the membrane as a helical span at residues 67–84; that stretch reads YWARYTDWLFTTPLLLYD. Over 85–95 the chain is Cytoplasmic; the sequence is LGLLAGADRNT. Residues 96–115 traverse the membrane as a helical segment; sequence IYSLVSLDVLMIGTGVVATL. The Extracellular portion of the chain corresponds to 116–128; it reads SAGSGVLSAGAER. A helical transmembrane segment spans residues 129–148; the sequence is LVWWGISTAFLLVLLYFLFS. Residues 149–166 lie on the Cytoplasmic side of the membrane; sequence SLSGRVANLPSDTRSTFK. A helical transmembrane segment spans residues 167–185; it reads TLRNLVTVVWLVYPVWWLV. Topologically, residues 186 to 197 are extracellular; sequence GSEGLGLVGIGI. Residues 198 to 209 form a helical membrane-spanning segment; the sequence is ETAGFMVIDLVA.

It belongs to the archaeal/bacterial/fungal opsin family.

Its subcellular location is the cell membrane. Light-driven proton pump. The protein is Bacteriorhodopsin (bop) of Halobacterium halobium (strain shark).